The chain runs to 453 residues: Phenolic glucoside malonyltransferase 1 (453 aa).

Histidine 165 functions as the Proton acceptor in the catalytic mechanism. The HXXXD motif signature appears at 165 to 169 (HVAGD). Residues lysine 254, histidine 266, and 268-269 (TS) contribute to the malonyl-CoA site. The active-site Proton acceptor is the aspartate 394. The DFGWG motif signature appears at 394 to 398 (DFGWG).

It belongs to the plant acyltransferase family. Phenolic glucoside malonyltransferase subfamily. Monomer. In terms of tissue distribution, highly expressed in flower. Also expressed in flower bud, stem, root and leaf.

The enzyme catalyses a flavonol 3-O-beta-D-glucoside + malonyl-CoA = a flavonol 3-O-(6-O-malonyl-beta-D-glucoside) + CoA. It carries out the reaction a flavonol 7-O-beta-D-glucoside + malonyl-CoA = a flavonol 7-O-(6-O-malonyl-beta-D-glucoside) + CoA. Its function is as follows. Malonyltransferase with broad substrate specificity acting on phenolic glucosides including xenobiotic naphthols. Has activity against flavonoid 7-O-glucosides, flavonoid 3-O-glucosides and naphthol glucosides, and to a lesser extent against coumarin glucosides in vitro. Prefers malonyl-CoA as an acyl donor, but also active with succinyl-CoA and methylmalonyl-CoA, but not with acetyl-CoA. This is Phenolic glucoside malonyltransferase 1 from Nicotiana tabacum (Common tobacco).